The following is a 194-amino-acid chain: Cilia- and flagella-associated protein 107 (194 aa).

Mn regions lie at residues 45 to 60 (TPQSIYRKEYIPFPDH) and 95 to 107 (ISTYDDHYNRHGY).

In terms of assembly, microtubule inner protein component of sperm flagellar doublet microtubules. In terms of tissue distribution, expressed in airway epithelial cells.

It is found in the cytoplasm. Its subcellular location is the cytoskeleton. The protein resides in the cilium axoneme. The protein localises to the flagellum axoneme. Functionally, microtubule inner protein (MIP) part of the dynein-decorated doublet microtubules (DMTs) in cilia axoneme, which is required for motile cilia beating. The polypeptide is Cilia- and flagella-associated protein 107 (Homo sapiens (Human)).